The following is a 288-amino-acid chain: Nucleotide-binding protein Veis_1053 (288 aa).

An ATP-binding site is contributed by 10–17 (GMSGSGKS). 59-62 (DVRS) is a binding site for GTP.

Belongs to the RapZ-like family.

Functionally, displays ATPase and GTPase activities. This chain is Nucleotide-binding protein Veis_1053, found in Verminephrobacter eiseniae (strain EF01-2).